Here is a 281-residue protein sequence, read N- to C-terminus: ATP phosphoribosyltransferase (281 aa).

The protein belongs to the ATP phosphoribosyltransferase family. Long subfamily. Requires Mg(2+) as cofactor.

Its subcellular location is the cytoplasm. It carries out the reaction 1-(5-phospho-beta-D-ribosyl)-ATP + diphosphate = 5-phospho-alpha-D-ribose 1-diphosphate + ATP. It functions in the pathway amino-acid biosynthesis; L-histidine biosynthesis; L-histidine from 5-phospho-alpha-D-ribose 1-diphosphate: step 1/9. Its activity is regulated as follows. Feedback inhibited by histidine. In terms of biological role, catalyzes the condensation of ATP and 5-phosphoribose 1-diphosphate to form N'-(5'-phosphoribosyl)-ATP (PR-ATP). Has a crucial role in the pathway because the rate of histidine biosynthesis seems to be controlled primarily by regulation of HisG enzymatic activity. The chain is ATP phosphoribosyltransferase (hisG) from Archaeoglobus fulgidus (strain ATCC 49558 / DSM 4304 / JCM 9628 / NBRC 100126 / VC-16).